The chain runs to 283 residues: Peroxisomal membrane protein PEX18 (283 aa).

A disordered region spans residues Ser-179 to Thr-201. Residues Ser-180–Glu-200 show a composition bias toward acidic residues.

As to quaternary structure, interacts with PEX7; The interaction with PEX7 stabilizes PEX18. Interacts with PEX13. In terms of processing, ubiquitinated in a UBC4/UBC5 dependent manner.

It localises to the cytoplasm. The protein localises to the peroxisome membrane. In terms of biological role, involved in peroxisome biogenesis and the import of peroxisomal matrix proteins that contain the peroxisomal targeting sequence PTS2. Required for peroxisomal targeting of PEX7 and growth on oleate. This is Peroxisomal membrane protein PEX18 (PEX18) from Saccharomyces cerevisiae (strain ATCC 204508 / S288c) (Baker's yeast).